The sequence spans 535 residues: Alpha-1,3-mannosyl-glycoprotein 4-beta-N-acetylglucosaminyltransferase A (535 aa).

The Cytoplasmic portion of the chain corresponds to 1-4 (MRLR). Residues 5-27 (NGTVATALAFITSFLTLSWYTTW) traverse the membrane as a helical; Signal-anchor for type II membrane protein segment. Positions 28-63 (QNGKEKLIAYQREFLALKERLRIAEHRISQRSSELN) form a coiled coil. The Lumenal portion of the chain corresponds to 28–535 (QNGKEKLIAY…NEIHIKKATN (508 aa)). 2 N-linked (GlcNAc...) asparagine glycosylation sites follow: Asn77 and Asn458. The residue at position 474 (Ser474) is a Phosphoserine.

This sequence belongs to the glycosyltransferase 54 family. A divalent metal cation serves as cofactor. N-glycosylated.

The protein localises to the golgi apparatus membrane. It is found in the secreted. The catalysed reaction is N(4)-{beta-D-GlcNAc-(1-&gt;2)-alpha-D-Man-(1-&gt;3)-[beta-D-GlcNAc-(1-&gt;2)-alpha-D-Man-(1-&gt;6)]-beta-D-Man-(1-&gt;4)-beta-D-GlcNAc-(1-&gt;4)-beta-D-GlcNAc}-L-asparaginyl-[protein] + UDP-N-acetyl-alpha-D-glucosamine = N(4)-{beta-D-GlcNAc-(1-&gt;2)-[beta-D-GlcNAc-(1-&gt;4)]-alpha-D-Man-(1-&gt;3)-[beta-D-GlcNAc-(1-&gt;2)-alpha-D-Man-(1-&gt;6)]-beta-D-Man-(1-&gt;4)-beta-D-GlcNAc-(1-&gt;4)-beta-D-GlcNAc}-L-asparaginyl-[protein] + UDP + H(+). The enzyme catalyses an N(4)-{beta-D-GlcNAc-(1-&gt;2)-alpha-D-Man-(1-&gt;3)-[alpha-D-Man-(1-&gt;6)]-beta-D-Man-(1-&gt;4)-beta-D-GlcNAc-(1-&gt;4)-beta-D-GlcNAc}-L-asparaginyl-[protein] + UDP-N-acetyl-alpha-D-glucosamine = an N(4)-{beta-D-GlcNAc-(1-&gt;2)-[beta-D-GlcNAc-(1-&gt;4)]-alpha-D-Man-(1-&gt;3)-[alpha-D-Man-(1-&gt;6)]-beta-D-Man-(1-&gt;4)-beta-D-GlcNAc-(1-&gt;4)-beta-D-GlcNAc}-L-asparaginyl-[protein] + UDP + H(+). It catalyses the reaction an N(4)-{beta-D-GlcNAc-(1-&gt;2)-alpha-D-Man-(1-&gt;3)-[beta-D-GlcNAc-(1-&gt;2)-[beta-D-GlcNAc-(1-&gt;6)]-alpha-D-Man-(1-&gt;6)]-beta-D-Man-(1-&gt;4)-beta-D-GlcNAc-(1-&gt;4)-beta-D-GlcNAc}-L-asparaginyl-[protein] + UDP-N-acetyl-alpha-D-glucosamine = an N(4)-{beta-D-GlcNAc-(1-&gt;2)-[beta-D-GlcNAc-(1-&gt;4)]-alpha-D-Man-(1-&gt;3)-[beta-D-GlcNAc-(1-&gt;2)-[beta-D-GlcNAc-(1-&gt;6)]-alpha-D-Man-(1-&gt;6)]-beta-D-Man-(1-&gt;4)-beta-D-GlcNAc-(1-&gt;4)-beta-D-GlcNAc}-L-asparaginyl-[protein] + UDP + H(+). It carries out the reaction an N(4)-{beta-D-GlcNAc-(1-&gt;2)-alpha-D-Man-(1-&gt;3)-[beta-D-GlcNAc-(1-&gt;2)-alpha-D-Man-(1-&gt;6)]-beta-D-Man-(1-&gt;4)-beta-D-GlcNAc-(1-&gt;4)-[alpha-L-Fuc-(1-&gt;6)]-beta-D-GlcNAc}-L-asparaginyl-[protein] + UDP-N-acetyl-alpha-D-glucosamine = N(4)-{beta-D-GlcNAc-(1-&gt;2)-[beta-D-GlcNAc-(1-&gt;4)]-alpha-D-Man-(1-&gt;3)-[beta-D-GlcNAc-(1-&gt;2)-alpha-D-Man-(1-&gt;6)]-beta-D-Man-(1-&gt;4)-beta-D-GlcNAc-(1-&gt;4)-[alpha-L-Fuc-(1-&gt;6)]-beta-D-GlcNAc}-asparaginyl-[protein] + UDP + H(+). The catalysed reaction is an N(4)-{beta-D-GlcNAc-(1-&gt;2)-alpha-D-Man-(1-&gt;3)-[beta-D-Gal-(1-&gt;4)-beta-D-GlcNAc-(1-&gt;2)-alpha-D-Man-(1-&gt;6)]-beta-D-Man-(1-&gt;4)-beta-D-GlcNAc-(1-&gt;4)-beta-D-GlcNAc}-L-asparaginyl-[protein] + UDP-N-acetyl-alpha-D-glucosamine = an N(4)-{beta-D-GlcNAc-(1-&gt;2)-[beta-D-GlcNAc-(1-&gt;4)]-alpha-D-Man-(1-&gt;3)-[beta-D-Gal-(1-&gt;4)-beta-D-GlcNAc-(1-&gt;2)-alpha-D-Man-(1-&gt;6)]-beta-D-Man-(1-&gt;4)-beta-D-GlcNAc-(1-&gt;4)-beta-D-GlcNAc}-L-asparaginyl-[protein] + UDP + H(+). The enzyme catalyses N(4)-{beta-D-GlcNAc-(1-&gt;2)-alpha-D-Man-(1-&gt;3)-[alpha-D-Man-(1-&gt;3)-{alpha-D-Man-(1-&gt;6)}-alpha-D-Man-(1-&gt;6)]-beta-D-Man-(1-&gt;4)-beta-D-GlcNAc-(1-&gt;4)-beta-D-GlcNAc}-asparaginyl-[protein] + UDP-N-acetyl-alpha-D-glucosamine = N(4)-{beta-D-GlcNAc-(1-&gt;2)-[beta-D-GlcNAc-(1-&gt;4)]-alpha-D-Man-(1-&gt;3)-[alpha-D-Man-(1-&gt;3)-{alpha-D-Man-(1-&gt;6)}-alpha-D-Man-(1-&gt;6)]-beta-D-Man-(1-&gt;4)-beta-D-GlcNAc-(1-&gt;4)-beta-D-GlcNAc}-asparaginyl-[protein] + UDP + H(+). It catalyses the reaction N(4)-{beta-D-GlcNAc-(1-&gt;2)-alpha-D-Man-(1-&gt;3)-beta-D-Man-(1-&gt;4)-beta-D-GlcNAc-(1-&gt;4)-beta-D-GlcNAc}-asparaginyl-[protein] + UDP-N-acetyl-alpha-D-glucosamine = N(4)-{beta-D-GlcNAc-(1-&gt;2)-[beta-D-GlcNAc-(1-&gt;4)]-alpha-D-Man-(1-&gt;3)-beta-D-Man-(1-&gt;4)-beta-D-GlcNAc-(1-&gt;4)-beta-D-GlcNAc}-asparaginyl-[protein] + UDP + H(+). It participates in protein modification; protein glycosylation. Inhibited by UDP. Its function is as follows. Glycosyltransferase that catalyze the transfer of GlcNAc from UDP-GlcNAc to the GlcNAcbeta1-2Manalpha1-3 arm of the core structure of N-linked glycans through a beta1-4 linkage and participates in the production of tri- and tetra-antennary N-linked sugar chains. Involved in glucose transport by mediating SLC2A2/GLUT2 glycosylation, thereby controlling cell-surface expression of SLC2A2 in pancreatic beta cells. The protein is Alpha-1,3-mannosyl-glycoprotein 4-beta-N-acetylglucosaminyltransferase A of Pongo abelii (Sumatran orangutan).